The sequence spans 608 residues: Glutamine--fructose-6-phosphate aminotransferase [isomerizing] (608 aa).

Cys-2 acts as the Nucleophile; for GATase activity in catalysis. Residues 2-217 form the Glutamine amidotransferase type-2 domain; the sequence is CGIVGIVGNQ…DGDWAVIGKT (216 aa). SIS domains lie at 281 to 422 and 456 to 598; these read ISDA…ARGT and LSRE…VDQP. Lys-603 serves as the catalytic For Fru-6P isomerization activity.

As to quaternary structure, homodimer.

The protein localises to the cytoplasm. It carries out the reaction D-fructose 6-phosphate + L-glutamine = D-glucosamine 6-phosphate + L-glutamate. Functionally, catalyzes the first step in hexosamine metabolism, converting fructose-6P into glucosamine-6P using glutamine as a nitrogen source. This chain is Glutamine--fructose-6-phosphate aminotransferase [isomerizing], found in Rhizobium meliloti (strain 1021) (Ensifer meliloti).